Here is a 71-residue protein sequence, read N- to C-terminus: MTLVKNMSSILENENILHGLIKTSNAPDCVSNASYKDFKDAIDSLTNDLELRLASDFFIKSNGRLSGLLPQ.

This is an uncharacterized protein from Vaccinia virus (strain Copenhagen) (VACV).